A 489-amino-acid polypeptide reads, in one-letter code: Phenylalanine--tRNA ligase alpha subunit (489 aa).

L-phenylalanine is bound by residues threonine 316, 355-357, phenylalanine 395, and phenylalanine 420; that span reads QLD.

Belongs to the class-II aminoacyl-tRNA synthetase family. Phe-tRNA synthetase alpha subunit type 2 subfamily. In terms of assembly, tetramer of two alpha and two beta subunits. It depends on Mg(2+) as a cofactor.

It is found in the cytoplasm. The enzyme catalyses tRNA(Phe) + L-phenylalanine + ATP = L-phenylalanyl-tRNA(Phe) + AMP + diphosphate + H(+). This chain is Phenylalanine--tRNA ligase alpha subunit, found in Pyrobaculum aerophilum (strain ATCC 51768 / DSM 7523 / JCM 9630 / CIP 104966 / NBRC 100827 / IM2).